The chain runs to 525 residues: COP9 signalosome complex subunit 1b (525 aa).

One can recognise a PCI domain in the interval 298–460; the sequence is HFLNANFDHC…KILFAKEADQ (163 aa).

The protein belongs to the CSN1 family. As to quaternary structure, component of the CSN complex, probably composed of CSN1b, alien/CSN2, CSN3, CSN4, CSN5, CSN6, CSN7 and CSN8.

Its subcellular location is the cytoplasm. It is found in the nucleus. Functionally, essential component of the COP9 signalosome complex (CSN), a complex involved in various cellular and developmental processes. The CSN complex is an essential regulator of the ubiquitin (Ubl) conjugation pathway by mediating the deneddylation of the cullin subunits of the SCF-type E3 ligase complexes, leading to decrease the Ubl ligase activity of SCF. The CSN complex plays an essential role in oogenesis and embryogenesis and is required for proper photoreceptor R cell differentiation and promote lamina glial cell migration or axon targeting. It also promotes Ubl-dependent degradation of cyclin E (CycE) during early oogenesis. The chain is COP9 signalosome complex subunit 1b (CSN1b) from Drosophila melanogaster (Fruit fly).